The chain runs to 273 residues: Imidazole glycerol phosphate synthase subunit HisF (273 aa).

Residues Asp11 and Asp134 contribute to the active site.

This sequence belongs to the HisA/HisF family. Heterodimer of HisH and HisF.

Its subcellular location is the cytoplasm. It catalyses the reaction 5-[(5-phospho-1-deoxy-D-ribulos-1-ylimino)methylamino]-1-(5-phospho-beta-D-ribosyl)imidazole-4-carboxamide + L-glutamine = D-erythro-1-(imidazol-4-yl)glycerol 3-phosphate + 5-amino-1-(5-phospho-beta-D-ribosyl)imidazole-4-carboxamide + L-glutamate + H(+). The protein operates within amino-acid biosynthesis; L-histidine biosynthesis; L-histidine from 5-phospho-alpha-D-ribose 1-diphosphate: step 5/9. IGPS catalyzes the conversion of PRFAR and glutamine to IGP, AICAR and glutamate. The HisF subunit catalyzes the cyclization activity that produces IGP and AICAR from PRFAR using the ammonia provided by the HisH subunit. This Methanococcoides burtonii (strain DSM 6242 / NBRC 107633 / OCM 468 / ACE-M) protein is Imidazole glycerol phosphate synthase subunit HisF.